The sequence spans 152 residues: Deoxyuridine 5'-triphosphate nucleotidohydrolase (152 aa).

Substrate-binding positions include 71 to 73, Asn84, 88 to 90, and Met98; these read RSG and LID.

It belongs to the dUTPase family. Mg(2+) serves as cofactor.

It carries out the reaction dUTP + H2O = dUMP + diphosphate + H(+). The protein operates within pyrimidine metabolism; dUMP biosynthesis; dUMP from dCTP (dUTP route): step 2/2. Its function is as follows. This enzyme is involved in nucleotide metabolism: it produces dUMP, the immediate precursor of thymidine nucleotides and it decreases the intracellular concentration of dUTP so that uracil cannot be incorporated into DNA. The polypeptide is Deoxyuridine 5'-triphosphate nucleotidohydrolase (Pectobacterium carotovorum subsp. carotovorum (strain PC1)).